A 155-amino-acid polypeptide reads, in one-letter code: Ribosomal RNA large subunit methyltransferase H (155 aa).

Residues L72, G103, and 122–127 (LSTMTL) contribute to the S-adenosyl-L-methionine site.

It belongs to the RNA methyltransferase RlmH family. In terms of assembly, homodimer.

Its subcellular location is the cytoplasm. It catalyses the reaction pseudouridine(1915) in 23S rRNA + S-adenosyl-L-methionine = N(3)-methylpseudouridine(1915) in 23S rRNA + S-adenosyl-L-homocysteine + H(+). Functionally, specifically methylates the pseudouridine at position 1915 (m3Psi1915) in 23S rRNA. The sequence is that of Ribosomal RNA large subunit methyltransferase H from Nitrosomonas eutropha (strain DSM 101675 / C91 / Nm57).